The chain runs to 490 residues: GTPase Der (490 aa).

EngA-type G domains are found at residues 3-166 (PVVA…MDDV) and 203-376 (IKLA…DSST). Residues 9-16 (GRPNVGKS), 56-60 (DTGGI), 118-121 (NKTD), 209-216 (GRPNVGKS), 256-260 (DTAGV), and 321-324 (NKWD) each bind GTP. The KH-like domain maps to 377–461 (RRVSTAMLTR…PIRIQFKEGE (85 aa)).

This sequence belongs to the TRAFAC class TrmE-Era-EngA-EngB-Septin-like GTPase superfamily. EngA (Der) GTPase family. In terms of assembly, associates with the 50S ribosomal subunit.

GTPase that plays an essential role in the late steps of ribosome biogenesis. This is GTPase Der from Salmonella choleraesuis (strain SC-B67).